Consider the following 766-residue polypeptide: TRP-like ion channel protein flc1 (766 aa).

Residues 1–24 (MRIPLFILTFLFTFFSLATTPVSA) form the signal peptide. Over 25 to 170 (DSGVLYTDAV…ANGKTAHQKG (146 aa)) the chain is Lumenal. N-linked (GlcNAc...) asparagine glycans are attached at residues asparagine 56, asparagine 73, asparagine 89, and asparagine 109. The helical transmembrane segment at 171–191 (VIWASAIFTLVAFLVAIWHTA) threads the bilayer. The Cytoplasmic segment spans residues 192–205 (SGTSTSPIQYRWFD). Residues 206–226 (ILFIFQVAAASGLLHLNYPLV) traverse the membrane as a helical segment. Topologically, residues 227 to 351 (YTNFVQNFHW…RIPEANAYDT (125 aa)) are lumenal. Asparagine 325 carries an N-linked (GlcNAc...) asparagine glycan. Residues 352–372 (IWFVFLALIGIFIAFHVLLFG) form a helical membrane-spanning segment. At 373–407 (MVLLFDRMGRNRSHLGWAARLRRMWWPFCVGNSLR) the chain is on the cytoplasmic side. A helical transmembrane segment spans residues 408–428 (LCLIGFFPIWIFAFWQFHIGD). At 429 to 432 (SGLS) the chain is on the lumenal side. The chain crosses the membrane as a helical span at residues 433–453 (IFWAVFGILLTLVPLATAFLL). Over 454-493 (SLLRARRISSTSPEINSLYTSFRYFHSIGVLYRQYRQKFH) the chain is Cytoplasmic. The helical transmembrane segment at 494–514 (YFWFTPFVLAMIARAGFIAFG) threads the bilayer. The Lumenal portion of the chain corresponds to 515-517 (PAS). The helical transmembrane segment at 518–538 (AWAQVIGNLVVEFIVLVALLA) threads the bilayer. At 539-548 (CRPHKDKKGD) the chain is on the cytoplasmic side. A helical transmembrane segment spans residues 549 to 569 (WLGAFLSICRLIAIGLLIAFI). The Lumenal portion of the chain corresponds to 570–580 (PDMNVKPIPRA). A helical transmembrane segment spans residues 581–601 (VIAFVIIVFYGVPVVFLFVGF). Topologically, residues 602–766 (LWNIGYGYLW…TDEKQWSRRY (165 aa)) are cytoplasmic. The segment at 704 to 766 (ASSADGALSP…TDEKQWSRRY (63 aa)) is disordered. Residues 757–766 (TDEKQWSRRY) show a composition bias toward basic and acidic residues.

Belongs to the transient receptor potential (TRP) ion channel family.

It localises to the endoplasmic reticulum membrane. In terms of biological role, endoplasmic reticulum membrane flavin carrier protein that plays a crucial role in Ca(2+) signaling/homeostasis via the modulation of the calcineurin-Crz1 stress response pathway which is important for both stress responses and virulence. The protein is TRP-like ion channel protein flc1 of Cryptococcus neoformans var. grubii serotype A (strain H99 / ATCC 208821 / CBS 10515 / FGSC 9487) (Filobasidiella neoformans var. grubii).